A 93-amino-acid chain; its full sequence is Small ribosomal subunit protein uS19 (93 aa).

It belongs to the universal ribosomal protein uS19 family.

Its function is as follows. Protein S19 forms a complex with S13 that binds strongly to the 16S ribosomal RNA. The protein is Small ribosomal subunit protein uS19 of Limosilactobacillus fermentum (strain NBRC 3956 / LMG 18251) (Lactobacillus fermentum).